The following is a 180-amino-acid chain: Large ribosomal subunit protein uL5 (180 aa).

It belongs to the universal ribosomal protein uL5 family. As to quaternary structure, part of the 50S ribosomal subunit; part of the 5S rRNA/L5/L18/L25 subcomplex. Contacts the 5S rRNA and the P site tRNA. Forms a bridge to the 30S subunit in the 70S ribosome.

This is one of the proteins that bind and probably mediate the attachment of the 5S RNA into the large ribosomal subunit, where it forms part of the central protuberance. In the 70S ribosome it contacts protein S13 of the 30S subunit (bridge B1b), connecting the 2 subunits; this bridge is implicated in subunit movement. Contacts the P site tRNA; the 5S rRNA and some of its associated proteins might help stabilize positioning of ribosome-bound tRNAs. The protein is Large ribosomal subunit protein uL5 of Chlamydia trachomatis serovar A (strain ATCC VR-571B / DSM 19440 / HAR-13).